A 159-amino-acid polypeptide reads, in one-letter code: Transcriptional repressor NrdR (159 aa).

The segment at 3 to 34 (CPFCRHDDTQVVDSRVSEDGAAIRRRRRCSAC) is a zinc-finger region. The ATP-cone domain occupies 49-139 (PAVVKKDGSR…VYRRFEDVSE (91 aa)).

The protein belongs to the NrdR family. Zn(2+) is required as a cofactor.

Functionally, negatively regulates transcription of bacterial ribonucleotide reductase nrd genes and operons by binding to NrdR-boxes. This is Transcriptional repressor NrdR from Burkholderia thailandensis (strain ATCC 700388 / DSM 13276 / CCUG 48851 / CIP 106301 / E264).